A 378-amino-acid chain; its full sequence is Lipid-A-disaccharide synthase (378 aa).

Belongs to the LpxB family.

It carries out the reaction a lipid X + a UDP-2-N,3-O-bis[(3R)-3-hydroxyacyl]-alpha-D-glucosamine = a lipid A disaccharide + UDP + H(+). The protein operates within bacterial outer membrane biogenesis; LPS lipid A biosynthesis. Its function is as follows. Condensation of UDP-2,3-diacylglucosamine and 2,3-diacylglucosamine-1-phosphate to form lipid A disaccharide, a precursor of lipid A, a phosphorylated glycolipid that anchors the lipopolysaccharide to the outer membrane of the cell. The chain is Lipid-A-disaccharide synthase from Methylobacillus flagellatus (strain ATCC 51484 / DSM 6875 / VKM B-1610 / KT).